The following is a 355-amino-acid chain: uncharacterized protein (355 aa).

It belongs to the 3-beta-HSD family.

This is an uncharacterized protein from Frog virus 3 (isolate Goorha) (FV-3).